Here is a 396-residue protein sequence, read N- to C-terminus: Phosphoglycerate kinase (396 aa).

Residues 23–25, R38, 61–64, R122, and R155 each bind substrate; these read DFN and HMGK. ATP contacts are provided by residues K206, G296, E327, and 353 to 356; that span reads GGDS.

Belongs to the phosphoglycerate kinase family. As to quaternary structure, monomer.

It is found in the cytoplasm. The enzyme catalyses (2R)-3-phosphoglycerate + ATP = (2R)-3-phospho-glyceroyl phosphate + ADP. It participates in carbohydrate degradation; glycolysis; pyruvate from D-glyceraldehyde 3-phosphate: step 2/5. This chain is Phosphoglycerate kinase, found in Clostridium botulinum (strain Alaska E43 / Type E3).